Reading from the N-terminus, the 493-residue chain is WAS/WASL-interacting protein family member 1 (493 aa).

Residues 1–14 (MPVPPPPAPPPPPT) show a composition bias toward pro residues. Residues 1–493 (MPVPPPPAPP…GAPPLPPIPR (493 aa)) are disordered. The span at 21–31 (EKPTLNKTEQA) shows a compositional bias: polar residues. The 18-residue stretch at 32–49 (GRNALLSDISKGKKLKKT) folds into the WH2 domain. R33 is subject to Asymmetric dimethylarginine. The tract at residues 45-48 (KLKK) is binds actin. Gly residues predominate over residues 67–105 (ASAGGYGGGGGGGGGGGGGGGGSGGNFGGGGPPGLGGLF). An omega-N-methylarginine mark is found at R126 and R135. Pro residues-rich tracts occupy residues 142 to 155 (FSPP…PAPS), 162 to 175 (PPEP…PPRP), and 183 to 195 (SLPP…PRPV). S143 carries the phosphoserine modification. At S227 the chain carries Phosphoserine. 3 stretches are compositionally biased toward pro residues: residues 239 to 248 (FPRPPLPPTP), 274 to 290 (VPPP…PSTP), and 298 to 315 (APPP…PLPP). Phosphoserine occurs at positions 330 and 340. The segment covering 336 to 361 (PPLPSPGRSGPLPPPPSERPPPPVRD) has biased composition (pro residues). 3 XRSGPXPPXP motif repeats span residues 342–351 (GRSGPLPPPP), 364–373 (GRSGPLPPPP), and 400–409 (PRSGPRPPLP). Residues 403-424 (GPRPPLPPDRPGAGAPPPPPPS) are compositionally biased toward pro residues. The span at 425-434 (TSVRNGFQDS) shows a compositional bias: polar residues. Over residues 470–484 (ARNESRSGSNRRERG) the composition is skewed to basic and acidic residues.

This sequence belongs to the verprolin family. As to quaternary structure, binds to WAS within the N-terminal region, at a site distinct from the CDC42-binding site. Binds profilin and actin. Binds to WASL. Interacts with DBNL. Interacts with DBNL. Interacts with FNBP1L (via the SH3 domain).

It is found in the cytoplasmic vesicle. It localises to the cytoplasm. The protein localises to the cytoskeleton. The protein resides in the cell projection. Its subcellular location is the ruffle. Its function is as follows. Plays a role in the reorganization of the actin cytoskeleton. Contributes with NCK1 and GRB2 in the recruitment and activation of WASL. May participate in regulating the subcellular localization of WASL, resulting in the disassembly of stress fibers in favor of filopodia formation. Plays a role in the formation of cell ruffles. The polypeptide is WAS/WASL-interacting protein family member 1 (Wipf1) (Mus musculus (Mouse)).